Consider the following 422-residue polypeptide: Probable Na(+)/H(+) antiporter 2 (422 aa).

A run of 13 helical transmembrane segments spans residues 3-23 (IVLFLGYLSILFAGGAIIAKI), 28-48 (GIPDIPLLLIFGLILSILNVI), 52-72 (IVESSFDFIGNFGLIILLFIG), 93-113 (ILALLIVWIISGIVFNFVFHL), 119-139 (IGLLFGAIVSATDPATLIPIF), 157-177 (VFNDPLGIVVTLICLSALGLA), 183-203 (ILEFFSLAVGGIILGVIAGKF), 216-236 (YIAPFTLGLAIAFWYFAEGIF), 242-262 (YEISGFMAVAIMGLYIGNVIV), 281-301 (LSIFIRILIFVLLGASISIPL), 307-327 (LPAFLCALGSILLARPVGVLI), 341-361 (IYLALEGPRGVVPATLAAMVY), and 384-404 (LAGTILVATFMTIIVSVVLEA).

This sequence belongs to the monovalent cation:proton antiporter 1 (CPA1) transporter (TC 2.A.36) family.

It is found in the cell membrane. This is probably a Na(+)/H(+) antiporter. The chain is Probable Na(+)/H(+) antiporter 2 from Methanocaldococcus jannaschii (strain ATCC 43067 / DSM 2661 / JAL-1 / JCM 10045 / NBRC 100440) (Methanococcus jannaschii).